The primary structure comprises 488 residues: Glutamyl-tRNA(Gln) amidotransferase subunit A (488 aa).

Catalysis depends on charge relay system residues Lys77 and Ser152. Ser176 functions as the Acyl-ester intermediate in the catalytic mechanism.

This sequence belongs to the amidase family. GatA subfamily. Heterotrimer of A, B and C subunits.

The enzyme catalyses L-glutamyl-tRNA(Gln) + L-glutamine + ATP + H2O = L-glutaminyl-tRNA(Gln) + L-glutamate + ADP + phosphate + H(+). Its function is as follows. Allows the formation of correctly charged Gln-tRNA(Gln) through the transamidation of misacylated Glu-tRNA(Gln) in organisms which lack glutaminyl-tRNA synthetase. The reaction takes place in the presence of glutamine and ATP through an activated gamma-phospho-Glu-tRNA(Gln). The polypeptide is Glutamyl-tRNA(Gln) amidotransferase subunit A (Streptococcus pyogenes serotype M3 (strain ATCC BAA-595 / MGAS315)).